The primary structure comprises 514 residues: MVVPFKNEPGIDFSVQENVERFQKTLEQVKNELGQTLPIVIDGEHITKDDTFDSINPANTSELIAKVSKATKEDVDKAFESSNKAYKAWRQWSHKDRAELLLRVAAIIRRRKEEISAVMVYEAGKPWDEAVGDAAEGIDFIEYYARSMMELADGKPVLDREGEHNKYFYKSIGTGVTIPPWNFPFAIMAGTTLAPVVAGNTVLLKPAEDTVLTAYKLIEILEEAGLPKGVVNFVPGDPKEIGDYLVDSVHTHFVTFTGSRATGTRIYERSAVVQEGQTFLKRVIAEMGGKDAIVVDENIDTDLAAESIITSAFGFSGQKCSACSRAIVHSSVYDEVLEKAVALTKELTVGNTVDNTFMGPVINKKQFDKIKKYIEIGGKEGKIEIGGEADDSTGYFIKPTIISGLKSSDQVMQEEIFGPVVGFTKFDNFEEAIEIANDTDYGLTGAVITNNRENWIKAVNEFDVGNLYLNRGCTAAVVGYHPFGGFKMSGTDAKTGSPDYLLNFLEQKVVSEMF.

Active-site residues include E286 and C320.

This sequence belongs to the aldehyde dehydrogenase family. RocA subfamily.

The enzyme catalyses L-glutamate 5-semialdehyde + NAD(+) + H2O = L-glutamate + NADH + 2 H(+). The protein operates within amino-acid degradation; L-proline degradation into L-glutamate; L-glutamate from L-proline: step 2/2. This is 1-pyrroline-5-carboxylate dehydrogenase from Staphylococcus haemolyticus (strain JCSC1435).